Here is a 219-residue protein sequence, read N- to C-terminus: 7-cyano-7-deazaguanine synthase 2 (219 aa).

An ATP-binding site is contributed by 8 to 18; that stretch reads YSGGMDSFTAL. Residues Cys185, Cys193, Cys196, and Cys199 each contribute to the Zn(2+) site.

It belongs to the QueC family. Requires Zn(2+) as cofactor.

The catalysed reaction is 7-carboxy-7-deazaguanine + NH4(+) + ATP = 7-cyano-7-deazaguanine + ADP + phosphate + H2O + H(+). It participates in purine metabolism; 7-cyano-7-deazaguanine biosynthesis. Functionally, catalyzes the ATP-dependent conversion of 7-carboxy-7-deazaguanine (CDG) to 7-cyano-7-deazaguanine (preQ(0)). In Colwellia psychrerythraea (strain 34H / ATCC BAA-681) (Vibrio psychroerythus), this protein is 7-cyano-7-deazaguanine synthase 2.